The chain runs to 380 residues: Homeobox protein ceh-6 (380 aa).

Positions 1 to 25 (MLIPSSSSIPSSLSASASDSEPSSL) are enriched in low complexity. 3 disordered regions span residues 1–31 (MLIPSSSSIPSSLSASASDSEPSSLNGSGIS), 167–190 (SGSVSGAGGPHQPLSDISDDSEQT), and 265–286 (GSPNSTFEKMTGQAGRKRKKRT). Residues 187-261 (SEQTCPDDLE…LLFKWLEEAD (75 aa)) form the POU-specific domain. The homeobox DNA-binding region spans 281–340 (KRKKRTSIEVNVKSRLEFHFQSNQKPNAQEITQVAMELQLEKEVVRVWFCNRRQKEKRIA).

It belongs to the POU transcription factor family. Class-3 subfamily. As to quaternary structure, interacts with egl-27, sox-2 and sem-4. Interacts with wdr-5.1. In terms of tissue distribution, expressed in a series of neurons in the ring ganglia, excretory cell, dividing neuroblasts in the ventral cord and rectal cells.

The protein localises to the nucleus. Functionally, vital for embryonic development and essential for the proper function of the excretory cell. Required for the transdifferentiation of the Y rectal epithelial cell to the PDA motor neuron during larval development. The sequence is that of Homeobox protein ceh-6 from Caenorhabditis elegans.